Consider the following 257-residue polypeptide: UPF0246 protein Ssed_1188 (257 aa).

It belongs to the UPF0246 family.

This is UPF0246 protein Ssed_1188 from Shewanella sediminis (strain HAW-EB3).